The following is an 88-amino-acid chain: Apolipoprotein C-I (88 aa).

The N-terminal stretch at 1 to 26 (MRLILSLPVLAVVLAMVLEGPAPAQA) is a signal peptide.

The protein belongs to the apolipoprotein C1 family.

It is found in the secreted. Functionally, inhibitor of lipoprotein binding to the low density lipoprotein (LDL) receptor, LDL receptor-related protein, and very low density lipoprotein (VLDL) receptor. Associates with high density lipoproteins (HDL) and the triacylglycerol-rich lipoproteins in the plasma and makes up about 10% of the protein of the VLDL and 2% of that of HDL. Appears to interfere directly with fatty acid uptake and is also the major plasma inhibitor of cholesteryl ester transfer protein (CETP). Binds free fatty acids and reduces their intracellular esterification. Modulates the interaction of APOE with beta-migrating VLDL and inhibits binding of beta-VLDL to the LDL receptor-related protein. This Cynopterus brachyotis (Lesser short-nosed fruit bat) protein is Apolipoprotein C-I (APOC1).